The primary structure comprises 553 residues: Salicylyl-CoA synthase / salicylate adenylyltransferase (553 aa).

G203 provides a ligand contact to ATP. Substrate is bound at residue 246–247 (HN). Residues G320, V342, D426, R441, and K533 each coordinate ATP. K533 contributes to the substrate binding site.

The protein belongs to the ATP-dependent AMP-binding enzyme family.

It carries out the reaction salicylate + ATP + CoA = 2-hydroxybenzoyl-CoA + AMP + diphosphate. Involved in the degradation of salicylate via a pathway involving coenzyme A derivative. Catalyzes the conversion of salicylate to salicyloyl-CoA via the formation of a salicylate-adenylate intermediate. The substrate specificity is strong, since benzoate, 3-hydroxybenzoate, 4-hydroxybenzoate, gentisate, 2-aminobenzoate, aminobenzoate, salicylamide, salicylaldoxime and 2-hydroxyphenyl acetate cannot substitute for salicylate. The chain is Salicylyl-CoA synthase / salicylate adenylyltransferase from Streptomyces sp.